We begin with the raw amino-acid sequence, 384 residues long: Probable inactive patatin-like protein 9 (384 aa).

The PNPLA domain maps to 33-234 (LSIDGGGTTG…VMNNPTAAAV (202 aa)). A GXGXXG motif is present at residues 37 to 42 (GGGTTG). D221 serves as the catalytic Proton acceptor. The DGA/G motif lies at 221–223 (DGG). A disordered region spans residues 363–384 (GKSSLPPSPCKESAVNPLADGR).

The protein belongs to the patatin family. Highly expressed in roots and at lower levels in flowers and siliques.

This is Probable inactive patatin-like protein 9 (PLP9) from Arabidopsis thaliana (Mouse-ear cress).